Reading from the N-terminus, the 292-residue chain is MATLRDIKRKIDAVKKTSQITKAMNMVAAAKLRGAQQNMERFHPYAEKFNEVIERLAEGVEDAGQYVLLTPREEVKKIELVLVTADRGLCGSFNNNLIVMAERFLKAKQAEGCQVRLTAVGRKGGDYFRRRTFEVRKRMTGLLNKPSYEDAAVLGRELIEQFEIGECDEVYVIYSRFLSMVRQQATLMKLLPIAPAKKTEAEEKGRLEYLFEPSHEALLTDLLPNYVFIEILESLYQTAVGEHAARMAAMENATSNCKELVKTLTLTYNKARQAGITKELMDIVGGAEALKK.

This sequence belongs to the ATPase gamma chain family. In terms of assembly, F-type ATPases have 2 components, CF(1) - the catalytic core - and CF(0) - the membrane proton channel. CF(1) has five subunits: alpha(3), beta(3), gamma(1), delta(1), epsilon(1). CF(0) has three main subunits: a, b and c.

The protein resides in the cell inner membrane. Functionally, produces ATP from ADP in the presence of a proton gradient across the membrane. The gamma chain is believed to be important in regulating ATPase activity and the flow of protons through the CF(0) complex. The chain is ATP synthase gamma chain from Syntrophobacter fumaroxidans (strain DSM 10017 / MPOB).